Here is a 656-residue protein sequence, read N- to C-terminus: tRNA 5-methylaminomethyl-2-thiouridine biosynthesis bifunctional protein MnmC (656 aa).

Residues 1–236 (MTDPLIPAVL…KRAMLVGRFA (236 aa)) are tRNA (mnm(5)s(2)U34)-methyltransferase. The interval 260–656 (IGTGLAGCAV…LRALRQGTVS (397 aa)) is FAD-dependent cmnm(5)s(2)U34 oxidoreductase.

In the N-terminal section; belongs to the methyltransferase superfamily. tRNA (mnm(5)s(2)U34)-methyltransferase family. The protein in the C-terminal section; belongs to the DAO family. The cofactor is FAD.

It localises to the cytoplasm. The catalysed reaction is 5-aminomethyl-2-thiouridine(34) in tRNA + S-adenosyl-L-methionine = 5-methylaminomethyl-2-thiouridine(34) in tRNA + S-adenosyl-L-homocysteine + H(+). Catalyzes the last two steps in the biosynthesis of 5-methylaminomethyl-2-thiouridine (mnm(5)s(2)U) at the wobble position (U34) in tRNA. Catalyzes the FAD-dependent demodification of cmnm(5)s(2)U34 to nm(5)s(2)U34, followed by the transfer of a methyl group from S-adenosyl-L-methionine to nm(5)s(2)U34, to form mnm(5)s(2)U34. The protein is tRNA 5-methylaminomethyl-2-thiouridine biosynthesis bifunctional protein MnmC of Paraburkholderia xenovorans (strain LB400).